Consider the following 487-residue polypeptide: Aspartyl/glutamyl-tRNA(Asn/Gln) amidotransferase subunit B (487 aa).

Belongs to the GatB/GatE family. GatB subfamily. Heterotrimer of A, B and C subunits.

It carries out the reaction L-glutamyl-tRNA(Gln) + L-glutamine + ATP + H2O = L-glutaminyl-tRNA(Gln) + L-glutamate + ADP + phosphate + H(+). The enzyme catalyses L-aspartyl-tRNA(Asn) + L-glutamine + ATP + H2O = L-asparaginyl-tRNA(Asn) + L-glutamate + ADP + phosphate + 2 H(+). Allows the formation of correctly charged Asn-tRNA(Asn) or Gln-tRNA(Gln) through the transamidation of misacylated Asp-tRNA(Asn) or Glu-tRNA(Gln) in organisms which lack either or both of asparaginyl-tRNA or glutaminyl-tRNA synthetases. The reaction takes place in the presence of glutamine and ATP through an activated phospho-Asp-tRNA(Asn) or phospho-Glu-tRNA(Gln). The protein is Aspartyl/glutamyl-tRNA(Asn/Gln) amidotransferase subunit B of Leptospira biflexa serovar Patoc (strain Patoc 1 / Ames).